The following is an 800-amino-acid chain: DNA topoisomerase 4 subunit A (800 aa).

The Topo IIA-type catalytic domain occupies 31 to 495; it reads LPDVRDGLKP…EIEEIKIDKE (465 aa). Tyr-119 serves as the catalytic O-(5'-phospho-DNA)-tyrosine intermediate.

This sequence belongs to the type II topoisomerase GyrA/ParC subunit family. ParC type 2 subfamily. In terms of assembly, heterotetramer composed of ParC and ParE.

The protein resides in the cell membrane. It carries out the reaction ATP-dependent breakage, passage and rejoining of double-stranded DNA.. In terms of biological role, topoisomerase IV is essential for chromosome segregation. It relaxes supercoiled DNA. Performs the decatenation events required during the replication of a circular DNA molecule. This Staphylococcus aureus (strain NCTC 8325 / PS 47) protein is DNA topoisomerase 4 subunit A.